Here is a 125-residue protein sequence, read N- to C-terminus: Large ribosomal subunit protein mL51 (125 aa).

The N-terminal 29 residues, 1-29 (MWSVQQLLWGCRSLLTQGCRSFSLGSRDL), are a transit peptide targeting the mitochondrion.

This sequence belongs to the mitochondrion-specific ribosomal protein mL51 family. In terms of assembly, component of the mitochondrial ribosome large subunit (39S) which comprises a 16S rRNA and about 50 distinct proteins.

The protein localises to the mitochondrion. In Xenopus tropicalis (Western clawed frog), this protein is Large ribosomal subunit protein mL51 (mrpl51).